A 1508-amino-acid chain; its full sequence is Pleiotropic ABC efflux transporter of multiple drugs CDR1 (1508 aa).

The interval 1-30 is disordered; the sequence is MSEKPFVDAPPPEDGVAHQVSPHDNGSLSE. Residues 1-524 are Cytoplasmic-facing; the sequence is MSEKPFVDAP…NFLRMKGDPS (524 aa). Positions 165 to 415 constitute an ABC transporter 1 domain; the sequence is DYWHDMRKID…FLDMGYECPQ (251 aa). A helical membrane pass occupies residues 525–545; it reads IVIFSIFGQGVMGLILSSVFY. The Extracellular portion of the chain corresponds to 546-559; that stretch reads NLQPTTGSFYYRGA. The chain crosses the membrane as a helical span at residues 560 to 580; it reads AMFFAVLFNAFASLLEIMSLF. Residues 581–608 lie on the Cytoplasmic side of the membrane; sequence EARPIVEKHKKYALYRPSADALASIISE. Residues 609–629 form a helical membrane-spanning segment; the sequence is LPVKLCMSTCFNFSFYFMVHF. Over 630-633 the chain is Extracellular; sequence RRDP. A helical membrane pass occupies residues 634-654; sequence GRFFFYWLFCGLCTLCMSHMF. Residues 655–673 are Cytoplasmic-facing; that stretch reads RSLGAVSTSLAAAMTPATS. Residues 674-694 form a helical membrane-spanning segment; that stretch reads VLLAMVIFTGFVIPIPSMLGW. At 695-775 the chain is on the extracellular side; the sequence is CRWIQYINPV…EYVNAHKWRN (81 aa). Residues 776–796 traverse the membrane as a helical segment; that stretch reads LGIVVAYIVVFLGVYIALTEF. Residues 797–1203 are Cytoplasmic-facing; the sequence is NKGAMQKGEI…TFQQYWRSPG (407 aa). Positions 839-860 are disordered; sequence KISYSDAMEKDSGESSTSDDKL. The segment covering 845 to 860 has biased composition (basic and acidic residues); it reads AMEKDSGESSTSDDKL. The ABC transporter 2 domain occupies 867 to 1110; the sequence is FHWKDLTYQV…GLIDYFEKHG (244 aa). An ATP-binding site is contributed by 903–910; it reads GASGAGKT. A helical membrane pass occupies residues 1204-1224; the sequence is YIYSKFFLVITASLFNGFAFF. Residues 1225-1239 are Extracellular-facing; the sequence is HSGTSQQGLQNQMFS. A helical membrane pass occupies residues 1240-1260; the sequence is MFMFYMPLQTLIQQMLPYYVM. Topologically, residues 1261–1288 are cytoplasmic; the sequence is QREIYEVREAPSRTFSWFAFIASQITTE. Residues 1289 to 1309 traverse the membrane as a helical segment; the sequence is IPFQVVLGTVAFFCWYYPVGL. At 1310–1326 the chain is on the extracellular side; that stretch reads YQNATPTDTVHERGALM. The helical transmembrane segment at 1327-1347 threads the bilayer; that stretch reads WLLVTAFYVYTISLGQMVVAF. Topologically, residues 1348–1362 are cytoplasmic; the sequence is MEIADNAANMVNLMF. The chain crosses the membrane as a helical span at residues 1363 to 1383; it reads IMCLNFCGVLATPEALPGFWI. Residues 1384 to 1475 lie on the Extracellular side of the membrane; sequence FMYRCNPFTY…HAVYSERWRN (92 aa). The helical transmembrane segment at 1476–1496 threads the bilayer; the sequence is FGIFIAFIAINMIGTIFFYWL. The Cytoplasmic segment spans residues 1497 to 1508; the sequence is ARVPKSSKSKNH.

It belongs to the ABC transporter superfamily.

Its subcellular location is the cell membrane. It carries out the reaction fluconazole(in) + ATP + H2O = fluconazole(out) + ADP + phosphate + H(+). It catalyses the reaction itraconazole(in) + ATP + H2O = itraconazole(out) + ADP + phosphate + H(+). The enzyme catalyses voriconazole(in) + ATP + H2O = voriconazole(out) + ADP + phosphate + H(+). With respect to regulation, the bis-benzodioxolylindolinone azoffluxin acts as an inhibitor of the transporter activity. Clorgyline analogs M19 and M25 inhibit the transcporter activity by uncoupling CDR1 ATPase activity from the active transport of substrates. Activity is also inhibited by beauvericin and oligomycin. Pleiotropic ABC efflux transporter that confers resistance to numerous chemicals including itraconazole, fluconazole, voriconazole and posaconazole. The protein is Pleiotropic ABC efflux transporter of multiple drugs CDR1 of Candidozyma auris (Yeast).